Here is a 115-residue protein sequence, read N- to C-terminus: Large ribosomal subunit protein uL22 (115 aa).

It belongs to the universal ribosomal protein uL22 family. In terms of assembly, part of the 50S ribosomal subunit.

Functionally, this protein binds specifically to 23S rRNA; its binding is stimulated by other ribosomal proteins, e.g. L4, L17, and L20. It is important during the early stages of 50S assembly. It makes multiple contacts with different domains of the 23S rRNA in the assembled 50S subunit and ribosome. The globular domain of the protein is located near the polypeptide exit tunnel on the outside of the subunit, while an extended beta-hairpin is found that lines the wall of the exit tunnel in the center of the 70S ribosome. This Ligilactobacillus salivarius (strain UCC118) (Lactobacillus salivarius) protein is Large ribosomal subunit protein uL22.